We begin with the raw amino-acid sequence, 270 residues long: Molybdenum-pterin-binding protein MopB (270 aa).

Mop domains follow at residues 131-197 (RTSA…LLAG) and 203-269 (RLSV…ILAL).

It belongs to the ModE family.

The chain is Molybdenum-pterin-binding protein MopB (mopB) from Rhodobacter capsulatus (Rhodopseudomonas capsulata).